Here is a 500-residue protein sequence, read N- to C-terminus: UDP-N-acetylmuramoyl-L-alanyl-D-glutamate--2,6-diaminopimelate ligase (500 aa).

Ser32 serves as a coordination point for UDP-N-acetyl-alpha-D-muramoyl-L-alanyl-D-glutamate. 117–123 (GTNGKTT) is a binding site for ATP. UDP-N-acetyl-alpha-D-muramoyl-L-alanyl-D-glutamate is bound by residues 159–160 (TT), Ser186, Gln192, and Arg194. Lys226 is subject to N6-carboxylysine. Meso-2,6-diaminopimelate-binding positions include Arg395, 419–422 (DNPR), Gly470, and Glu474. A Meso-diaminopimelate recognition motif motif is present at residues 419 to 422 (DNPR).

It belongs to the MurCDEF family. MurE subfamily. Mg(2+) is required as a cofactor. Post-translationally, carboxylation is probably crucial for Mg(2+) binding and, consequently, for the gamma-phosphate positioning of ATP.

It localises to the cytoplasm. The enzyme catalyses UDP-N-acetyl-alpha-D-muramoyl-L-alanyl-D-glutamate + meso-2,6-diaminopimelate + ATP = UDP-N-acetyl-alpha-D-muramoyl-L-alanyl-gamma-D-glutamyl-meso-2,6-diaminopimelate + ADP + phosphate + H(+). The protein operates within cell wall biogenesis; peptidoglycan biosynthesis. Catalyzes the addition of meso-diaminopimelic acid to the nucleotide precursor UDP-N-acetylmuramoyl-L-alanyl-D-glutamate (UMAG) in the biosynthesis of bacterial cell-wall peptidoglycan. The protein is UDP-N-acetylmuramoyl-L-alanyl-D-glutamate--2,6-diaminopimelate ligase of Parasynechococcus marenigrum (strain WH8102).